A 210-amino-acid chain; its full sequence is Na(+)-translocating NADH-quinone reductase subunit D (210 aa).

A run of 5 helical transmembrane segments spans residues 42 to 62 (FVMT…VSLI), 72 to 92 (IIVQ…VLKA), 103 to 123 (VFVS…AFAM), 131 to 151 (FIDG…VAFF), and 178 to 198 (NGLM…IWAI).

This sequence belongs to the NqrDE/RnfAE family. As to quaternary structure, composed of six subunits; NqrA, NqrB, NqrC, NqrD, NqrE and NqrF.

The protein resides in the cell inner membrane. It carries out the reaction a ubiquinone + n Na(+)(in) + NADH + H(+) = a ubiquinol + n Na(+)(out) + NAD(+). Functionally, NQR complex catalyzes the reduction of ubiquinone-1 to ubiquinol by two successive reactions, coupled with the transport of Na(+) ions from the cytoplasm to the periplasm. NqrA to NqrE are probably involved in the second step, the conversion of ubisemiquinone to ubiquinol. This is Na(+)-translocating NADH-quinone reductase subunit D from Aliivibrio fischeri (strain ATCC 700601 / ES114) (Vibrio fischeri).